The chain runs to 288 residues: uncharacterized protein (288 aa).

This sequence to M.bovis Mb1522c, M.leprae ML1804 and M.avium MAV321.

This is an uncharacterized protein from Mycobacterium tuberculosis (strain CDC 1551 / Oshkosh).